The following is a 534-amino-acid chain: Melanopsin-B (534 aa).

Residues Met-1 to Ser-32 are Extracellular-facing. Residues Phe-33–Tyr-53 form a helical membrane-spanning segment. The Cytoplasmic portion of the chain corresponds to Arg-54–Tyr-64. The helical transmembrane segment at Phe-65–Phe-85 threads the bilayer. At Leu-86–Val-102 the chain is on the extracellular side. Cys-100 and Cys-178 are joined by a disulfide. A helical membrane pass occupies residues Tyr-103 to Ile-123. Over Asn-124–Gln-146 the chain is Cytoplasmic. The helical transmembrane segment at Ile-147–Ser-167 threads the bilayer. The Extracellular segment spans residues Ser-168–Cys-198. N-linked (GlcNAc...) asparagine glycosylation occurs at Asn-189. Residues Cys-199 to Ile-219 traverse the membrane as a helical segment. The Cytoplasmic segment spans residues Arg-220 to Lys-250. A helical transmembrane segment spans residues Ile-251–Leu-271. Over Ile-272 to Lys-286 the chain is Extracellular. The chain crosses the membrane as a helical span at residues Thr-287 to Ile-307. Lys-294 is subject to N6-(retinylidene)lysine. At His-308 to Ser-534 the chain is on the cytoplasmic side. Positions Ser-478 to Glu-501 are disordered. The segment covering Glu-482–Glu-499 has biased composition (basic and acidic residues).

The protein belongs to the G-protein coupled receptor 1 family. Opsin subfamily. Highest level in the iris, high level in the inner nuclear layer, possibly in horizontal cells, and lowest level in retinal pigment epithelium. Expressed in melanophore cells of the skin.

It is found in the cell membrane. Its function is as follows. Photoreceptor implicated in non-image-forming responses to light. May be able to isomerize covalently bound all-trans retinal back to 11-cis retinal. In Xenopus laevis (African clawed frog), this protein is Melanopsin-B.